The following is a 130-amino-acid chain: Sec-independent protein translocase protein TatB (130 aa).

The chain crosses the membrane as a helical span at residues 2 to 22 (FANIGWGEMLVLVVVGLVVLG). Positions 108–130 (DAVASAQEAPDEPVRPPFDSDAT) are disordered.

It belongs to the TatB family. As to quaternary structure, the Tat system comprises two distinct complexes: a TatABC complex, containing multiple copies of TatA, TatB and TatC subunits, and a separate TatA complex, containing only TatA subunits. Substrates initially bind to the TatABC complex, which probably triggers association of the separate TatA complex to form the active translocon.

Its subcellular location is the cell membrane. Functionally, part of the twin-arginine translocation (Tat) system that transports large folded proteins containing a characteristic twin-arginine motif in their signal peptide across membranes. Together with TatC, TatB is part of a receptor directly interacting with Tat signal peptides. TatB may form an oligomeric binding site that transiently accommodates folded Tat precursor proteins before their translocation. In Mycobacterium ulcerans (strain Agy99), this protein is Sec-independent protein translocase protein TatB.